Reading from the N-terminus, the 232-residue chain is tRNA (guanine-N(1)-)-methyltransferase (232 aa).

Gly-116 provides a ligand contact to S-adenosyl-L-methionine.

Belongs to the RNA methyltransferase TrmD family. In terms of assembly, homodimer.

The protein resides in the cytoplasm. It carries out the reaction guanosine(37) in tRNA + S-adenosyl-L-methionine = N(1)-methylguanosine(37) in tRNA + S-adenosyl-L-homocysteine + H(+). In terms of biological role, specifically methylates guanosine-37 in various tRNAs. The polypeptide is tRNA (guanine-N(1)-)-methyltransferase (Chlorobium luteolum (strain DSM 273 / BCRC 81028 / 2530) (Pelodictyon luteolum)).